A 343-amino-acid polypeptide reads, in one-letter code: 4-hydroxy-3-methylbut-2-enyl diphosphate reductase (343 aa).

Residue C18 participates in [4Fe-4S] cluster binding. The (2E)-4-hydroxy-3-methylbut-2-enyl diphosphate site is built by H47 and H83. Dimethylallyl diphosphate is bound by residues H47 and H83. Positions 47 and 83 each coordinate isopentenyl diphosphate. C105 provides a ligand contact to [4Fe-4S] cluster. H133 is a (2E)-4-hydroxy-3-methylbut-2-enyl diphosphate binding site. H133 lines the dimethylallyl diphosphate pocket. H133 is a binding site for isopentenyl diphosphate. The active-site Proton donor is the E135. T174 serves as a coordination point for (2E)-4-hydroxy-3-methylbut-2-enyl diphosphate. Residue C204 coordinates [4Fe-4S] cluster. Positions 232, 233, 234, and 277 each coordinate (2E)-4-hydroxy-3-methylbut-2-enyl diphosphate. S232, S233, N234, and S277 together coordinate dimethylallyl diphosphate. Isopentenyl diphosphate-binding residues include S232, S233, N234, and S277.

Belongs to the IspH family. It depends on [4Fe-4S] cluster as a cofactor.

It carries out the reaction isopentenyl diphosphate + 2 oxidized [2Fe-2S]-[ferredoxin] + H2O = (2E)-4-hydroxy-3-methylbut-2-enyl diphosphate + 2 reduced [2Fe-2S]-[ferredoxin] + 2 H(+). It catalyses the reaction dimethylallyl diphosphate + 2 oxidized [2Fe-2S]-[ferredoxin] + H2O = (2E)-4-hydroxy-3-methylbut-2-enyl diphosphate + 2 reduced [2Fe-2S]-[ferredoxin] + 2 H(+). Its pathway is isoprenoid biosynthesis; dimethylallyl diphosphate biosynthesis; dimethylallyl diphosphate from (2E)-4-hydroxy-3-methylbutenyl diphosphate: step 1/1. It participates in isoprenoid biosynthesis; isopentenyl diphosphate biosynthesis via DXP pathway; isopentenyl diphosphate from 1-deoxy-D-xylulose 5-phosphate: step 6/6. Catalyzes the conversion of 1-hydroxy-2-methyl-2-(E)-butenyl 4-diphosphate (HMBPP) into a mixture of isopentenyl diphosphate (IPP) and dimethylallyl diphosphate (DMAPP). Acts in the terminal step of the DOXP/MEP pathway for isoprenoid precursor biosynthesis. The sequence is that of 4-hydroxy-3-methylbut-2-enyl diphosphate reductase from Bartonella henselae (strain ATCC 49882 / DSM 28221 / CCUG 30454 / Houston 1) (Rochalimaea henselae).